The sequence spans 347 residues: Olfactory receptor 1L6 (347 aa).

Over 1 to 62 (MSYFYRLKLM…GLSSNPQLQK (62 aa)) the chain is Extracellular. N-linked (GlcNAc...) asparagine glycosylation is present at asparagine 41. A helical membrane pass occupies residues 63–86 (PLFAIFLIMYLLAAVGNVLIIPAI). At 87 to 94 (YSDPRLHT) the chain is on the cytoplasmic side. Residues 95 to 116 (PMYFFLSNLSFMDICFTTVIVP) traverse the membrane as a helical segment. At 117-137 (KMLVNFLSETKVISYVGCLAQ) the chain is on the extracellular side. An intrachain disulfide couples cysteine 134 to cysteine 226. A helical transmembrane segment spans residues 138 to 157 (MYFFMAFGNTDSYLLASMAI). The Cytoplasmic portion of the chain corresponds to 158–176 (DRLVAICNPLHYDVVMKPR). The helical transmembrane segment at 177–195 (HCLLMLLGSCSISHLHSLF) threads the bilayer. Topologically, residues 196-233 (RVLLMSRLSFCASHIIKHFFCDTQPVLKLSCSDTSSSQ) are extracellular. Residues 234–256 (MVVMTETLAVIVTPFLCIIFSYL) form a helical membrane-spanning segment. Topologically, residues 257 to 273 (RIMVTVLRIPSAAGKWK) are cytoplasmic. Residues 274–296 (AFSTCGSHLTAVALFYGSIIYVY) traverse the membrane as a helical segment. Residues 297 to 309 (FRPLSMYSVVRDR) are Extracellular-facing. A helical membrane pass occupies residues 310–329 (VATVMYTVVTPMLNPFIYSL). At 330–347 (RNKDMKRGLKKLQDRIYR) the chain is on the cytoplasmic side.

Belongs to the G-protein coupled receptor 1 family.

It localises to the cell membrane. In terms of biological role, odorant receptor. This Homo sapiens (Human) protein is Olfactory receptor 1L6 (OR1L6).